The following is a 496-amino-acid chain: Probable malate:quinone oxidoreductase (496 aa).

Belongs to the MQO family. The cofactor is FAD.

The enzyme catalyses (S)-malate + a quinone = a quinol + oxaloacetate. The protein operates within carbohydrate metabolism; tricarboxylic acid cycle; oxaloacetate from (S)-malate (quinone route): step 1/1. In Prochlorococcus marinus (strain MIT 9303), this protein is Probable malate:quinone oxidoreductase.